Here is a 115-residue protein sequence, read N- to C-terminus: uncharacterized protein (115 aa).

The region spanning 1-115 is the MSP domain; the sequence is MGVEISLDPP…ETVIKLSAAE (115 aa).

This is an uncharacterized protein from Caenorhabditis elegans.